The chain runs to 313 residues: MPGVDISFLKKSGRRTMAAAAVIALLGGCGADAGSEPATTAASTTAPSAATDAATAEFAALEQRFGARLGVYAVDTTSGAVVAYRADERFGMASTFKGLACGALLREHPLSSGYFDQVVRYSREEVVSYSPVTETRVDTGMTVAELCHATITVSDNTAGNQILKLLGGPAGFTAFLRSLGDEVSRLDRWETELNEVPPGEERDTTTPAAVAANYRALVLGDVLAEPERAQLRDWLVANTTGDQRIRAGVPAGWTVGDKTGGGSHGGNNDVAVAWTETGDPIVIALLSHRTDPAAKADNALLAEATRAVVTALR.

The signal sequence occupies residues 1-28 (MPGVDISFLKKSGRRTMAAAAVIALLGG). The N-palmitoyl cysteine moiety is linked to residue C29. The S-diacylglycerol cysteine moiety is linked to residue C29. S94 serves as the catalytic Acyl-ester intermediate. A substrate-binding site is contributed by S154. E190 (proton acceptor) is an active-site residue. Residue 258–260 (KTG) participates in substrate binding.

This sequence belongs to the class-A beta-lactamase family.

Its subcellular location is the cell membrane. The enzyme catalyses a beta-lactam + H2O = a substituted beta-amino acid. Its activity is regulated as follows. Inhibited by clavulanic acid, and at a low level by tazobactam and sulbactam. Its function is as follows. Confers high levels of resistance to amoxicillin, benzylpenicillin, piperacillin, ticarcillin and cephalothin. Also hydrolyzes aztreonam at a low level. Not active against ceftazidime, cefotaxime and imipenem. The sequence is that of Beta-lactamase FAR-1 (bla) from Nocardia farcinica (strain IFM 10152).